Reading from the N-terminus, the 812-residue chain is Phosphoenolpyruvate synthase (812 aa).

H430 functions as the Tele-phosphohistidine intermediate in the catalytic mechanism. Residues R520, R588, E690, G711, S712, N713, and D714 each coordinate substrate. Residue E690 coordinates Mg(2+). Mg(2+) is bound at residue D714. C761 serves as the catalytic Proton donor.

The protein belongs to the PEP-utilizing enzyme family. Mg(2+) is required as a cofactor.

It carries out the reaction pyruvate + ATP + H2O = phosphoenolpyruvate + AMP + phosphate + 2 H(+). The protein operates within carbohydrate biosynthesis; gluconeogenesis. Functionally, catalyzes the phosphorylation of pyruvate to phosphoenolpyruvate. This is Phosphoenolpyruvate synthase (ppsA) from Helicobacter pylori (strain ATCC 700392 / 26695) (Campylobacter pylori).